Reading from the N-terminus, the 318-residue chain is NADH-ubiquinone oxidoreductase chain 1 (318 aa).

Transmembrane regions (helical) follow at residues 2–22 (FLTN…FLTL), 36–56 (GPNI…IKLF), 69–89 (LLFT…WIPL), 100–120 (LGML…LWSG), 130–152 (IGAL…ILLH), 171–191 (HIWL…STLA), 217–237 (AGPF…MNAL), 254–273 (LYST…FLWI), and 294–314 (LPLT…LTSI).

This sequence belongs to the complex I subunit 1 family.

The protein localises to the mitochondrion inner membrane. It carries out the reaction a ubiquinone + NADH + 5 H(+)(in) = a ubiquinol + NAD(+) + 4 H(+)(out). Functionally, core subunit of the mitochondrial membrane respiratory chain NADH dehydrogenase (Complex I) that is believed to belong to the minimal assembly required for catalysis. Complex I functions in the transfer of electrons from NADH to the respiratory chain. The immediate electron acceptor for the enzyme is believed to be ubiquinone. The polypeptide is NADH-ubiquinone oxidoreductase chain 1 (MT-ND1) (Cyclopes didactylus (Silky anteater)).